The chain runs to 904 residues: Myelin regulatory factor-like protein (904 aa).

Positions 46 to 132 (LQRQLPDTPP…ATCRHQTGPS (87 aa)) are disordered. Over residues 100 to 117 (PSQSMAGQTHSSFQNGYP) the composition is skewed to polar residues. Residues 108 to 400 (THSSFQNGYP…SNPGQFENDS (293 aa)) constitute a DNA-binding region (NDT80). A Peptidase S74 domain is found at 446–554 (SDSRVKENIQ…KLTNNLEERI (109 aa)). Positions 538–575 (GAVKQLCKLTNNLEERIEELEIWNKKLARLKRLSSSWK) form a coiled coil. The chain crosses the membrane as a helical span at residues 624–644 (LVVVLIAVMAFCALTIVALYI). The segment at 656 to 688 (NLPLSNMTSSPEPALSSTAPTSAPHTTPETTQT) is disordered. Low complexity predominate over residues 663–688 (TSSPEPALSSTAPTSAPHTTPETTQT).

Belongs to the MRF family.

The protein localises to the membrane. This is Myelin regulatory factor-like protein (Myrfl) from Mus musculus (Mouse).